The following is a 400-amino-acid chain: Glutamyl-tRNA reductase (400 aa).

Residues 45-48, S103, 108-110, and Q114 each bind substrate; these read TCNR and EDQ. The active-site Nucleophile is C46. 179-184 is a binding site for NADP(+); it reads GYGEIG.

This sequence belongs to the glutamyl-tRNA reductase family. Homodimer.

It catalyses the reaction (S)-4-amino-5-oxopentanoate + tRNA(Glu) + NADP(+) = L-glutamyl-tRNA(Glu) + NADPH + H(+). The protein operates within porphyrin-containing compound metabolism; protoporphyrin-IX biosynthesis; 5-aminolevulinate from L-glutamyl-tRNA(Glu): step 1/2. Its function is as follows. Catalyzes the NADPH-dependent reduction of glutamyl-tRNA(Glu) to glutamate 1-semialdehyde (GSA). The protein is Glutamyl-tRNA reductase of Clostridium perfringens (strain ATCC 13124 / DSM 756 / JCM 1290 / NCIMB 6125 / NCTC 8237 / Type A).